Consider the following 190-residue polypeptide: Xanthine phosphoribosyltransferase (190 aa).

Residues Leu20 and Asn27 each coordinate xanthine. 128–132 lines the 5-phospho-alpha-D-ribose 1-diphosphate pocket; the sequence is ANGKA. Lys156 lines the xanthine pocket.

This sequence belongs to the purine/pyrimidine phosphoribosyltransferase family. Xpt subfamily. As to quaternary structure, homodimer.

The protein resides in the cytoplasm. It carries out the reaction XMP + diphosphate = xanthine + 5-phospho-alpha-D-ribose 1-diphosphate. It participates in purine metabolism; XMP biosynthesis via salvage pathway; XMP from xanthine: step 1/1. Functionally, converts the preformed base xanthine, a product of nucleic acid breakdown, to xanthosine 5'-monophosphate (XMP), so it can be reused for RNA or DNA synthesis. The protein is Xanthine phosphoribosyltransferase of Pseudomonas fluorescens (strain SBW25).